A 293-amino-acid chain; its full sequence is Lipoyl synthase (293 aa).

[4Fe-4S] cluster contacts are provided by Cys38, Cys43, Cys49, Cys64, Cys68, Cys71, and Ser277. Residues 50-266 form the Radical SAM core domain; sequence WSRGTATFLL…STIAKNAGIR (217 aa).

This sequence belongs to the radical SAM superfamily. Lipoyl synthase family. It depends on [4Fe-4S] cluster as a cofactor.

The protein resides in the cytoplasm. The catalysed reaction is [[Fe-S] cluster scaffold protein carrying a second [4Fe-4S](2+) cluster] + N(6)-octanoyl-L-lysyl-[protein] + 2 oxidized [2Fe-2S]-[ferredoxin] + 2 S-adenosyl-L-methionine + 4 H(+) = [[Fe-S] cluster scaffold protein] + N(6)-[(R)-dihydrolipoyl]-L-lysyl-[protein] + 4 Fe(3+) + 2 hydrogen sulfide + 2 5'-deoxyadenosine + 2 L-methionine + 2 reduced [2Fe-2S]-[ferredoxin]. It functions in the pathway protein modification; protein lipoylation via endogenous pathway; protein N(6)-(lipoyl)lysine from octanoyl-[acyl-carrier-protein]: step 2/2. In terms of biological role, catalyzes the radical-mediated insertion of two sulfur atoms into the C-6 and C-8 positions of the octanoyl moiety bound to the lipoyl domains of lipoate-dependent enzymes, thereby converting the octanoylated domains into lipoylated derivatives. The protein is Lipoyl synthase of Chlorobium chlorochromatii (strain CaD3).